The sequence spans 124 residues: Replication restart protein PriB (124 aa).

The SSB domain maps to Ile12–Asp112.

It belongs to the PriB family. As to quaternary structure, homodimer. Interacts with PriA and DnaT. Component of the replication restart primosome. Primosome assembly occurs via a 'hand-off' mechanism. PriA binds to replication forks, subsequently PriB then DnaT bind; DnaT then displaces ssDNA to generate the helicase loading substrate.

Functionally, involved in the restart of stalled replication forks, which reloads the replicative helicase on sites other than the origin of replication; the PriA-PriB pathway is the major replication restart pathway. During primosome assembly it facilitates complex formation between PriA and DnaT on DNA; stabilizes PriA on DNA. Stimulates the DNA unwinding activity of PriA helicase. This is Replication restart protein PriB from Actinobacillus pleuropneumoniae serotype 5b (strain L20).